Reading from the N-terminus, the 506-residue chain is Histidine ammonia-lyase (506 aa).

A cross-link (5-imidazolinone (Ala-Gly)) is located at residues 141–143; that stretch reads ASG. Residue S142 is modified to 2,3-didehydroalanine (Ser).

Belongs to the PAL/histidase family. Post-translationally, contains an active site 4-methylidene-imidazol-5-one (MIO), which is formed autocatalytically by cyclization and dehydration of residues Ala-Ser-Gly.

It is found in the cytoplasm. The catalysed reaction is L-histidine = trans-urocanate + NH4(+). Its pathway is amino-acid degradation; L-histidine degradation into L-glutamate; N-formimidoyl-L-glutamate from L-histidine: step 1/3. The polypeptide is Histidine ammonia-lyase (Burkholderia multivorans (strain ATCC 17616 / 249)).